Reading from the N-terminus, the 349-residue chain is Shematrin-like protein 1 (349 aa).

A signal peptide spans 1–16; it reads MLKLVCAVFLIATVSA.

Prismatic layer of shell (at protein level).

Its subcellular location is the secreted. This Margaritifera margaritifera (Freshwater pearl mussel) protein is Shematrin-like protein 1.